Reading from the N-terminus, the 78-residue chain is Acyl carrier protein (78 aa).

A Carrier domain is found at 2 to 77; it reads SDTEERVKKI…DAVKFIDKAS (76 aa). At Ser37 the chain carries O-(pantetheine 4'-phosphoryl)serine.

This sequence belongs to the acyl carrier protein (ACP) family. In terms of processing, 4'-phosphopantetheine is transferred from CoA to a specific serine of apo-ACP by AcpS. This modification is essential for activity because fatty acids are bound in thioester linkage to the sulfhydryl of the prosthetic group.

The protein resides in the cytoplasm. It participates in lipid metabolism; fatty acid biosynthesis. Its function is as follows. Carrier of the growing fatty acid chain in fatty acid biosynthesis. This is Acyl carrier protein from Bartonella bacilliformis (strain ATCC 35685 / KC583 / Herrer 020/F12,63).